The primary structure comprises 366 residues: DNA-directed RNA polymerase subunit alpha (366 aa).

The alpha N-terminal domain (alpha-NTD) stretch occupies residues 1 to 260 (MAISDNGGGS…DQLQSFIGSE (260 aa)). Residues 274 to 366 (EGALPYDHNL…ENLSKQYSED (93 aa)) form an alpha C-terminal domain (alpha-CTD) region.

It belongs to the RNA polymerase alpha chain family. Homodimer. The RNAP catalytic core consists of 2 alpha, 1 beta, 1 beta' and 1 omega subunit. When a sigma factor is associated with the core the holoenzyme is formed, which can initiate transcription.

It catalyses the reaction RNA(n) + a ribonucleoside 5'-triphosphate = RNA(n+1) + diphosphate. In terms of biological role, DNA-dependent RNA polymerase catalyzes the transcription of DNA into RNA using the four ribonucleoside triphosphates as substrates. The sequence is that of DNA-directed RNA polymerase subunit alpha from Anaplasma marginale (strain St. Maries).